Reading from the N-terminus, the 233-residue chain is 2,3-bisphosphoglycerate-dependent phosphoglycerate mutase (233 aa).

Residues 8–15, 21–22, arginine 60, 116–119, lysine 127, 143–144, and 187–188 each bind substrate; these read RHGQSLWN, TG, ERYY, RR, and GN. Catalysis depends on histidine 9, which acts as the Tele-phosphohistidine intermediate. The active-site Proton donor/acceptor is glutamate 116.

Belongs to the phosphoglycerate mutase family. BPG-dependent PGAM subfamily.

The catalysed reaction is (2R)-2-phosphoglycerate = (2R)-3-phosphoglycerate. It functions in the pathway carbohydrate degradation; glycolysis; pyruvate from D-glyceraldehyde 3-phosphate: step 3/5. Its function is as follows. Catalyzes the interconversion of 2-phosphoglycerate and 3-phosphoglycerate. In Gloeothece citriformis (strain PCC 7424) (Cyanothece sp. (strain PCC 7424)), this protein is 2,3-bisphosphoglycerate-dependent phosphoglycerate mutase.